The sequence spans 92 residues: MARSIWKGPFVDGYLLKKADASRATGRSEVIKIWSRRSTILPQFVGLTFGVYNGHKHVPVNVTEEMIGHKFGEFSPTRTFHGHSADKKARRG.

The protein belongs to the universal ribosomal protein uS19 family.

Functionally, protein S19 forms a complex with S13 that binds strongly to the 16S ribosomal RNA. The sequence is that of Small ribosomal subunit protein uS19 from Methylocella silvestris (strain DSM 15510 / CIP 108128 / LMG 27833 / NCIMB 13906 / BL2).